The primary structure comprises 588 residues: L-fucose isomerase (588 aa).

Residues Glu335 and Asp359 each act as proton acceptor in the active site. Residues Glu335, Asp359, and His525 each contribute to the Mn(2+) site.

It belongs to the L-fucose isomerase family. It depends on Mn(2+) as a cofactor.

It localises to the cytoplasm. It carries out the reaction L-fucose = L-fuculose. Its pathway is carbohydrate degradation; L-fucose degradation; L-lactaldehyde and glycerone phosphate from L-fucose: step 1/3. In terms of biological role, converts the aldose L-fucose into the corresponding ketose L-fuculose. This chain is L-fucose isomerase, found in Streptococcus pneumoniae (strain P1031).